The primary structure comprises 500 residues: Cytochrome P450 6B4 (500 aa).

Cys-443 contacts heme.

Belongs to the cytochrome P450 family. The cofactor is heme.

The protein localises to the endoplasmic reticulum membrane. Its subcellular location is the microsome membrane. It carries out the reaction an organic molecule + reduced [NADPH--hemoprotein reductase] + O2 = an alcohol + oxidized [NADPH--hemoprotein reductase] + H2O + H(+). In terms of biological role, enables the insect to feed on furanocoumarin-producing plants and evolved as an adaptation for detoxification of xanthotoxin and other furanocoumarins. This isozyme metabolizes isopimpinellin, imperatorin, and bergapten at high rates, xanthotoxin and psoralen at intermediate rates and angelicin, sphondin, and trioxsalen only at very low rates. The polypeptide is Cytochrome P450 6B4 (CYP6B4) (Papilio glaucus (Eastern tiger swallowtail butterfly)).